A 423-amino-acid polypeptide reads, in one-letter code: AP-1 complex subunit mu-1 (423 aa).

At Ser-2 the chain carries N-acetylserine. Phosphothreonine occurs at positions 152, 154, and 223. An MHD domain is found at 168 to 421 (KNEVFLDVIE…ITQNGDYQLR (254 aa)).

It belongs to the adaptor complexes medium subunit family. As to quaternary structure, adaptor protein complex 1 (AP-1) is a heterotetramer composed of two large adaptins (gamma-type subunit AP1G1 and beta-type subunit AP1B1), a medium adaptin (mu-type subunit AP1M1 or AP1M2) and a small adaptin (sigma-type subunit AP1S1 or AP1S2 or AP1S3). Interacts with MARCHF11. Post-translationally, phosphorylation of membrane-bound AP1M1/AP1M2 increases its affinity for sorting signals.

Its subcellular location is the golgi apparatus. The protein localises to the cytoplasmic vesicle. It is found in the clathrin-coated vesicle membrane. In terms of biological role, subunit of clathrin-associated adaptor protein complex 1 that plays a role in protein sorting in the trans-Golgi network (TGN) and endosomes. The AP complexes mediate the recruitment of clathrin to membranes and the recognition of sorting signals within the cytosolic tails of transmembrane cargo molecules. The protein is AP-1 complex subunit mu-1 (Ap1m1) of Mus musculus (Mouse).